Consider the following 492-residue polypeptide: N-succinylglutamate 5-semialdehyde dehydrogenase (492 aa).

NAD(+) is bound at residue 220–225 (GSASTG). Catalysis depends on residues glutamate 243 and cysteine 277.

Belongs to the aldehyde dehydrogenase family. AstD subfamily.

It carries out the reaction N-succinyl-L-glutamate 5-semialdehyde + NAD(+) + H2O = N-succinyl-L-glutamate + NADH + 2 H(+). The protein operates within amino-acid degradation; L-arginine degradation via AST pathway; L-glutamate and succinate from L-arginine: step 4/5. Catalyzes the NAD-dependent reduction of succinylglutamate semialdehyde into succinylglutamate. In Salmonella paratyphi A (strain AKU_12601), this protein is N-succinylglutamate 5-semialdehyde dehydrogenase.